Reading from the N-terminus, the 186-residue chain is Quinone reductase (186 aa).

Residues 13–20 (SLRKESYN), 80–83 (EYNR), and Ser116 each bind FMN.

Belongs to the SsuE family. As to quaternary structure, homotetramer. Dimer of dimers. The tetrameric configuration has a central role in chromate reductase activity. The cofactor is FMN.

It carries out the reaction a quinone + NADH + H(+) = a quinol + NAD(+). It catalyses the reaction a quinone + NADPH + H(+) = a quinol + NADP(+). The catalysed reaction is Cr(6+) + 2 NADH + O2 = Cr(3+) + superoxide + 2 NAD(+) + 2 H(+). The enzyme catalyses Cr(6+) + 2 NADPH + O2 = Cr(3+) + superoxide + 2 NADP(+) + 2 H(+). Its activity is regulated as follows. May be inhibited by divalent cations. Catalyzes the reduction of quinones. Acts by simultaneous two-electron transfer, avoiding formation of highly reactive semiquinone intermediates and producing quinols that promote tolerance of H(2)O(2). Quinone reduction is probably the primary biological role of ChrR. Can also reduce toxic chromate to insoluble and less toxic Cr(3+). Catalyzes the transfer of three electrons to Cr(6+) producing Cr(3+) and one electron to molecular oxygen. This reaction produces transiently a minimal amount of the toxic Cr(5+) species and reactive oxygen species (ROS). Chromate reduction protects the cell against chromate toxicity, but is likely a secondary activity. Can also reduce potassium ferricyanide and 2,6-dichloroindophenol. During chromate reduction, displays an eightfold preference for NADH over NADPH. This Pseudomonas putida (strain ATCC 47054 / DSM 6125 / CFBP 8728 / NCIMB 11950 / KT2440) protein is Quinone reductase.